We begin with the raw amino-acid sequence, 136 residues long: MIPGEIITKSTEVEINNHHPETVIEVENTGDRPIQVGSHFHFYEANAALDFEREMAYGKHLDIPAGAAVRFEPGDKKEVQLVEYAGKRKIFGFRGMVNGPIDESRVYRPTDENDEYAGVFGDNGTENVNKKGGKRS.

Residues E112–S136 form a disordered region.

It belongs to the urease beta subunit family. In terms of assembly, heterotrimer of UreA (gamma), UreB (beta) and UreC (alpha) subunits. Three heterotrimers associate to form the active enzyme.

It is found in the cytoplasm. The enzyme catalyses urea + 2 H2O + H(+) = hydrogencarbonate + 2 NH4(+). The protein operates within nitrogen metabolism; urea degradation; CO(2) and NH(3) from urea (urease route): step 1/1. The protein is Urease subunit beta of Staphylococcus aureus (strain MRSA252).